Reading from the N-terminus, the 289-residue chain is ATP synthase gamma chain (289 aa).

Belongs to the ATPase gamma chain family. F-type ATPases have 2 components, CF(1) - the catalytic core - and CF(0) - the membrane proton channel. CF(1) has five subunits: alpha(3), beta(3), gamma(1), delta(1), epsilon(1). CF(0) has three main subunits: a, b and c.

It is found in the cell membrane. Its function is as follows. Produces ATP from ADP in the presence of a proton gradient across the membrane. The gamma chain is believed to be important in regulating ATPase activity and the flow of protons through the CF(0) complex. This Mycoplasmopsis synoviae (strain 53) (Mycoplasma synoviae) protein is ATP synthase gamma chain.